Here is a 1050-residue protein sequence, read N- to C-terminus: Sentrin-specific protease 7 (1050 aa).

Disordered stretches follow at residues 1–28, 183–288, and 304–365; these read MDKR…SSDL, PPVT…DVKY, and RRLR…KSDF. Residues serine 11, serine 12, serine 13, and serine 25 each carry the phosphoserine modification. The segment covering 196–211 has biased composition (low complexity); it reads LQSEQLSSSSDGSLES. The span at 259–271 shows a compositional bias: polar residues; it reads ISDTQPEDLNSGS. Residues 273 to 288 show a composition bias toward basic and acidic residues; that stretch reads GCDHLEQESRNKDVKY. Over residues 310 to 320 the composition is skewed to polar residues; sequence LPDSQYCTSLD. Basic and acidic residues-rich tracts occupy residues 321–331 and 338–365; these read KSTEQTKKQED and EFEK…KSDF. Phosphoserine is present on residues serine 373, serine 433, serine 443, and serine 444. Positions 443–476 are disordered; sequence SSDEEGPVEHKSSEILKLQSKQDRETTNENESTS. The span at 449–469 shows a compositional bias: basic and acidic residues; that stretch reads PVEHKSSEILKLQSKQDRETT. A protease region spans residues 760-1050; sequence LGVTNEDLEC…HLQQQKGSSS (291 aa). Catalysis depends on residues histidine 860 and aspartate 939. Cysteine 992 serves as the catalytic Nucleophile.

The protein belongs to the peptidase C48 family.

Its subcellular location is the cytoplasm. Protease that acts as a positive regulator of the cGAS-STING pathway by catalyzing desumoylation of CGAS. Desumoylation of CGAS promotes DNA-binding activity of CGAS, subsequent oligomerization and activation. Deconjugates SUMO2 and SUMO3 from targeted proteins, but not SUMO1. Catalyzes the deconjugation of poly-SUMO2 and poly-SUMO3 chains. Has very low efficiency in processing full-length SUMO proteins to their mature forms. The sequence is that of Sentrin-specific protease 7 from Homo sapiens (Human).